A 317-amino-acid polypeptide reads, in one-letter code: Transaldolase (317 aa).

Lysine 126 serves as the catalytic Schiff-base intermediate with substrate.

It belongs to the transaldolase family. Type 1 subfamily. In terms of assembly, homodimer.

The protein localises to the cytoplasm. It carries out the reaction D-sedoheptulose 7-phosphate + D-glyceraldehyde 3-phosphate = D-erythrose 4-phosphate + beta-D-fructose 6-phosphate. It participates in carbohydrate degradation; pentose phosphate pathway; D-glyceraldehyde 3-phosphate and beta-D-fructose 6-phosphate from D-ribose 5-phosphate and D-xylulose 5-phosphate (non-oxidative stage): step 2/3. Functionally, transaldolase is important for the balance of metabolites in the pentose-phosphate pathway. This chain is Transaldolase, found in Burkholderia thailandensis (strain ATCC 700388 / DSM 13276 / CCUG 48851 / CIP 106301 / E264).